The sequence spans 336 residues: Dihydrolipoyl dehydrogenase (336 aa).

FAD is bound by residues 34–42, Lys-51, and Gly-115; that span reads EKEVVGGIC. The cysteines at positions 42 and 47 are disulfide-linked. Residues 180–184, Glu-203, Val-237, and 264–267 contribute to the NAD(+) site; these read GGGVI and SVGT. FAD is bound by residues Asp-304 and Ala-312.

Belongs to the class-I pyridine nucleotide-disulfide oxidoreductase family. In terms of assembly, homodimer. It depends on FAD as a cofactor.

Its subcellular location is the cytoplasm. The enzyme catalyses N(6)-[(R)-dihydrolipoyl]-L-lysyl-[protein] + NAD(+) = N(6)-[(R)-lipoyl]-L-lysyl-[protein] + NADH + H(+). Functionally, lipoamide dehydrogenase is a component of the alpha-ketoacid dehydrogenase complexes. This chain is Dihydrolipoyl dehydrogenase (pdhD), found in Acholeplasma laidlawii.